The chain runs to 305 residues: Myb-like transcriptional regulator basR (305 aa).

3 Myb-like domains span residues 5-59 (RRRW…YNRF), 60-110 (TGGL…HHCL), and 111-162 (NPEL…TILS). Residues 175 to 215 (PCCDSPSPSKSSRRPPSTPTSTPQVPGSRQGSSYDPYDYGS) are disordered. Over residues 198–207 (QVPGSRQGSS) the composition is skewed to polar residues.

Its subcellular location is the nucleus. In terms of biological role, transcription regulator that acts as a central regulatory node for the integration of external bacterial signals leading to the regulation of secondary metabolite gene clusters such as orsellinic, lecanoric acid, cichorine, 2,4-dihydroxy-3-methyl-6-(2-oxopropyl)benzaldehyde (dba), emericellamide or microperfuranone clusters. The polypeptide is Myb-like transcriptional regulator basR (Emericella nidulans (strain FGSC A4 / ATCC 38163 / CBS 112.46 / NRRL 194 / M139) (Aspergillus nidulans)).